A 1447-amino-acid chain; its full sequence is Regulator of G-protein signaling 12 (1447 aa).

The tract at residues 1–21 is disordered; the sequence is MFRAGEASKRPLPGPSPPRVR. Residues 22 to 98 enclose the PDZ domain; sequence SVEVARGRAG…GVLHMVIAEG (77 aa). Phosphoserine is present on residues Ser172 and Ser195. Lys196 participates in a covalent cross-link: Glycyl lysine isopeptide (Lys-Gly) (interchain with G-Cter in SUMO2). Residues 228–340 enclose the PID domain; the sequence is VAMIVGYLGS…GALRTSCHVF (113 aa). Disordered regions lie at residues 410–429 and 443–482; these read ADAH…IGNF and LGGS…DPEG. Polar residues predominate over residues 413–425; sequence HQNNSTSSNSDSG. The span at 451–464 shows a compositional bias: gly residues; that stretch reads GPGGSAWDGVGGRG. Omega-N-methylarginine is present on residues Arg524 and Arg633. The interval 618-652 is disordered; that stretch reads NVRKTKEDKKGSKFGRGTGLTQPSQRTSARRSFGR. Ser661 and Ser671 each carry phosphoserine. The RGS domain occupies 715–832; it reads SFERLLQDPV…LKSPLYQECI (118 aa). A compositionally biased stretch (polar residues) spans 843–853; it reads DSQQVPSSPAS. Residues 843 to 941 form a disordered region; that stretch reads DSQQVPSSPA…RESQGSVSSA (99 aa). Ser850 and Ser879 each carry phosphoserine. Over residues 914-923 the composition is skewed to basic and acidic residues; it reads EHGDHADDAL. Ser943 is subject to Phosphoserine. 2 RBD domains span residues 962–1032 and 1034–1104; these read KHCC…LEKR and LFRL…LEEK. A compositionally biased stretch (basic and acidic residues) spans 1103 to 1117; sequence EKDPSRGKASADKQK. Residues 1103–1169 are disordered; it reads EKDPSRGKAS…RDPRLSKREE (67 aa). A compositionally biased stretch (polar residues) spans 1122-1136; that stretch reads KQNTAVNSSSRNHSA. Over residues 1151–1169 the composition is skewed to basic and acidic residues; that stretch reads IKGENGKNARDPRLSKREE. Residues 1187–1209 form the GoLoco domain; the sequence is AEEFFELISKAQSNRADDQRGLL. The tract at residues 1240–1447 is disordered; it reads GFSKRSATGN…KTSAHHATFV (208 aa). Polar residues predominate over residues 1244–1258; the sequence is RSATGNGRESASQPG. Composition is skewed to low complexity over residues 1267–1280 and 1289–1298; these read SSDS…SASS and PPGQKSPSGP. Positions 1301-1313 are enriched in polar residues; it reads TPQSPVSLAQEGT.

As to quaternary structure, interacts with GNAI1. Interacts with GNAI2 and GNAI3; the interactions are GDP-dependent. Isoform 3 is brain specific.

It localises to the nucleus. Its subcellular location is the cytoplasm. The protein localises to the cell projection. The protein resides in the dendrite. It is found in the synapse. It localises to the nucleus matrix. Regulates G protein-coupled receptor signaling cascades. Inhibits signal transduction by increasing the GTPase activity of G protein alpha subunits, thereby driving them into their inactive GDP-bound form. Its function is as follows. Behaves as a cell cycle-dependent transcriptional repressor, promoting inhibition of S-phase DNA synthesis. The protein is Regulator of G-protein signaling 12 (RGS12) of Homo sapiens (Human).